A 396-amino-acid polypeptide reads, in one-letter code: Elongation factor Tu (396 aa).

Positions 10–206 constitute a tr-type G domain; sequence KPHCNIGTIG…QVDAYIPQPE (197 aa). Positions 19-26 are G1; the sequence is GHVDHGKT. 19–26 is a binding site for GTP; the sequence is GHVDHGKT. Threonine 26 contacts Mg(2+). Residues 60–64 form a G2 region; sequence GITIS. Residues 81 to 84 are G3; it reads DCPG. GTP contacts are provided by residues 81–85 and 136–139; these read DCPGH and NKVD. The G4 stretch occupies residues 136-139; sequence NKVD. The interval 174–176 is G5; sequence SAL.

It belongs to the TRAFAC class translation factor GTPase superfamily. Classic translation factor GTPase family. EF-Tu/EF-1A subfamily. As to quaternary structure, monomer.

The protein resides in the cytoplasm. The catalysed reaction is GTP + H2O = GDP + phosphate + H(+). GTP hydrolase that promotes the GTP-dependent binding of aminoacyl-tRNA to the A-site of ribosomes during protein biosynthesis. This is Elongation factor Tu from Gluconobacter oxydans (strain 621H) (Gluconobacter suboxydans).